Reading from the N-terminus, the 131-residue chain is uncharacterized protein (131 aa).

It is found in the plastid. It localises to the chloroplast. This is an uncharacterized protein from Chlorella vulgaris (Green alga).